A 207-amino-acid chain; its full sequence is 8-oxoguanine DNA glycosylase/AP lyase (207 aa).

Active-site residues include Lys129 and Asp147.

The protein belongs to the type-2 OGG1 family.

The catalysed reaction is 2'-deoxyribonucleotide-(2'-deoxyribose 5'-phosphate)-2'-deoxyribonucleotide-DNA = a 3'-end 2'-deoxyribonucleotide-(2,3-dehydro-2,3-deoxyribose 5'-phosphate)-DNA + a 5'-end 5'-phospho-2'-deoxyribonucleoside-DNA + H(+). Functionally, catalyzes the excision of an oxidatively damaged form of guanine (7,8-dihydro-8-oxoguanine = 8-oxoG) from DNA. Also cleaves the DNA backbone at apurinic/apyrimidinic sites (AP sites). Has little specificity for the base opposite oxoG. The chain is 8-oxoguanine DNA glycosylase/AP lyase from Methanocaldococcus jannaschii (strain ATCC 43067 / DSM 2661 / JAL-1 / JCM 10045 / NBRC 100440) (Methanococcus jannaschii).